A 317-amino-acid polypeptide reads, in one-letter code: Phospho-N-acetylmuramoyl-pentapeptide-transferase (317 aa).

9 helical membrane-spanning segments follow: residues valine 3 to isoleucine 23, glycine 48 to methionine 68, leucine 72 to isoleucine 92, phenylalanine 112 to serine 132, isoleucine 141 to valine 161, leucine 171 to phenylalanine 191, tryptophan 193 to leucine 213, alanine 238 to isoleucine 258, and valine 297 to isoleucine 317.

It belongs to the glycosyltransferase 4 family. MraY subfamily. It depends on Mg(2+) as a cofactor.

It is found in the cell membrane. It catalyses the reaction UDP-N-acetyl-alpha-D-muramoyl-L-alanyl-gamma-D-glutamyl-meso-2,6-diaminopimeloyl-D-alanyl-D-alanine + di-trans,octa-cis-undecaprenyl phosphate = di-trans,octa-cis-undecaprenyl diphospho-N-acetyl-alpha-D-muramoyl-L-alanyl-D-glutamyl-meso-2,6-diaminopimeloyl-D-alanyl-D-alanine + UMP. It participates in cell wall biogenesis; peptidoglycan biosynthesis. In terms of biological role, catalyzes the initial step of the lipid cycle reactions in the biosynthesis of the cell wall peptidoglycan: transfers peptidoglycan precursor phospho-MurNAc-pentapeptide from UDP-MurNAc-pentapeptide onto the lipid carrier undecaprenyl phosphate, yielding undecaprenyl-pyrophosphoryl-MurNAc-pentapeptide, known as lipid I. The polypeptide is Phospho-N-acetylmuramoyl-pentapeptide-transferase (Clostridium acetobutylicum (strain ATCC 824 / DSM 792 / JCM 1419 / IAM 19013 / LMG 5710 / NBRC 13948 / NRRL B-527 / VKM B-1787 / 2291 / W)).